The chain runs to 396 residues: Phosphoglycerate kinase (396 aa).

Residues 21-23, arginine 36, 59-62, arginine 118, and arginine 151 contribute to the substrate site; these read DFN and HLGR. ATP is bound by residues lysine 201, glycine 292, glutamate 323, and 349–352; that span reads GGDS.

The protein belongs to the phosphoglycerate kinase family. Monomer.

The protein localises to the cytoplasm. It carries out the reaction (2R)-3-phosphoglycerate + ATP = (2R)-3-phospho-glyceroyl phosphate + ADP. The protein operates within carbohydrate degradation; glycolysis; pyruvate from D-glyceraldehyde 3-phosphate: step 2/5. The sequence is that of Phosphoglycerate kinase from Leptospira interrogans serogroup Icterohaemorrhagiae serovar Lai (strain 56601).